We begin with the raw amino-acid sequence, 294 residues long: Acetyl-coenzyme A carboxylase carboxyl transferase subunit beta (294 aa).

One can recognise a CoA carboxyltransferase N-terminal domain in the interval 29 to 294 (LWEKCPECGQ…TQVVKLQTNA (266 aa)). Residues cysteine 33, cysteine 36, cysteine 52, and cysteine 55 each contribute to the Zn(2+) site. Residues 33–55 (CPECGQVVYRKDLIDNCSVCSNC) form a C4-type zinc finger.

The protein belongs to the AccD/PCCB family. In terms of assembly, acetyl-CoA carboxylase is a heterohexamer composed of biotin carboxyl carrier protein (AccB), biotin carboxylase (AccC) and two subunits each of ACCase subunit alpha (AccA) and ACCase subunit beta (AccD). Requires Zn(2+) as cofactor.

Its subcellular location is the cytoplasm. It catalyses the reaction N(6)-carboxybiotinyl-L-lysyl-[protein] + acetyl-CoA = N(6)-biotinyl-L-lysyl-[protein] + malonyl-CoA. The protein operates within lipid metabolism; malonyl-CoA biosynthesis; malonyl-CoA from acetyl-CoA: step 1/1. Its function is as follows. Component of the acetyl coenzyme A carboxylase (ACC) complex. Biotin carboxylase (BC) catalyzes the carboxylation of biotin on its carrier protein (BCCP) and then the CO(2) group is transferred by the transcarboxylase to acetyl-CoA to form malonyl-CoA. This is Acetyl-coenzyme A carboxylase carboxyl transferase subunit beta from Prochlorococcus marinus (strain NATL2A).